Consider the following 360-residue polypeptide: MSSSNSRVHEEQPPTENRRYARPTAQMNRVIEQQPRRRDYFQNNDNSGRRGYNRHENNGNAQDVVRSHYNARPDLGYKKRQFSPIIQLKRFNNWIKSVLIQKFAPHASDYPILVLDMGCGKGGDLIKWDKAGIDGYIGIDIAEVSVNQAKKRYREMHASFDALFYAGDCFSSSINELLPPDQRKFDVVSLQFCMHYAFESEEKVRVLLGNVSKCLPRGGVMIGTIPNSDVIVKHIKMLKPGEKEWGNDIYKVRFPESPPRSFRPPYGIQYYFYLEDAVTDVPEYVVPFEAFRAVAEGYNLELIWVKPFLDILNEEKNSETYGPLMDRMKVVDNEGHRGIGGQEKEAAGFYLAFAFEKRGI.

The segment at 1–62 (MSSSNSRVHE…NRHENNGNAQ (62 aa)) is disordered. Residues 7 to 19 (RVHEEQPPTENRR) show a composition bias toward basic and acidic residues. Residues 83–358 (SPIIQLKRFN…FYLAFAFEKR (276 aa)) form the mRNA cap 0 methyltransferase domain. 92–93 (NN) is a binding site for mRNA. Residues K96, G118, D140, D168, Q191, and Y196 each coordinate S-adenosyl-L-methionine.

The protein belongs to the class I-like SAM-binding methyltransferase superfamily. mRNA cap 0 methyltransferase family. As to quaternary structure, interacts with cdk9.

Its subcellular location is the nucleus. The enzyme catalyses a 5'-end (5'-triphosphoguanosine)-ribonucleoside in mRNA + S-adenosyl-L-methionine = a 5'-end (N(7)-methyl 5'-triphosphoguanosine)-ribonucleoside in mRNA + S-adenosyl-L-homocysteine. Responsible for methylating the 5'-cap structure of mRNAs. The protein is mRNA cap guanine-N(7) methyltransferase (pcm1) of Schizosaccharomyces pombe (strain 972 / ATCC 24843) (Fission yeast).